A 366-amino-acid chain; its full sequence is Histone-lysine N-methyltransferase SETD7 (366 aa).

3 MORN repeats span residues 36–58, 59–81, and 106–128; these read FEGHFVHGEKNGRGKFYFFDGST, LEGFYVDDALQGQGIYTYEDGGS, and FKGQYKDNVRHGVCWIYYPDGGS. In terms of domain architecture, SET spans 214-336; sequence ERVYVNDSLI…KDEELTVAYG (123 aa). Residues 226–228, asparagine 296, and histidine 297 contribute to the S-adenosyl-L-methionine site; that span reads AGE.

Belongs to the class V-like SAM-binding methyltransferase superfamily. Histone-lysine methyltransferase family. SET7 subfamily.

It is found in the nucleus. The protein localises to the chromosome. The enzyme catalyses L-lysyl(4)-[histone H3] + S-adenosyl-L-methionine = N(6)-methyl-L-lysyl(4)-[histone H3] + S-adenosyl-L-homocysteine + H(+). The catalysed reaction is L-lysyl-[protein] + S-adenosyl-L-methionine = N(6)-methyl-L-lysyl-[protein] + S-adenosyl-L-homocysteine + H(+). Its function is as follows. Histone methyltransferase that specifically monomethylates 'Lys-4' of histone H3. H3 'Lys-4' methylation represents a specific tag for epigenetic transcriptional activation. Plays a central role in the transcriptional activation of genes. Also has methyltransferase activity toward non-histone proteins. The chain is Histone-lysine N-methyltransferase SETD7 (setd7) from Xenopus tropicalis (Western clawed frog).